A 545-amino-acid chain; its full sequence is E3 ubiquitin-protein ligase ipaH9.8 (545 aa).

An interaction with target proteins region spans residues 1 to 242 (MLPINNNFSL…YHGPRIYFSM (242 aa)). 8 LRR repeats span residues 57 to 77 (NSDE…NLPA), 78 to 99 (QITL…PVTL), 100 to 117 (KKLY…VLPP), 118 to 139 (ALES…PDSL), 140 to 157 (LTMN…SLPQ), 158 to 179 (ALKN…SEGN), 182 to 203 (VVRE…ILNL), and 205 to 228 (NECS…QRLT). A linker region spans residues 243–250 (SDGQQNTL). Positions 251–545 (HRPLADAVTA…SENGSQLHHS (295 aa)) are E3 ubiquitin-protein ligase catalytic domain. Residues 253 to 545 (PLADAVTAWF…SENGSQLHHS (293 aa)) form the NEL domain. The active-site Glycyl thioester intermediate is the cysteine 337.

It belongs to the LRR-containing bacterial E3 ligase family. In terms of assembly, also interacts with human and mouse U2AF1 (U2AF35). Ubiquitinated in the presence of host E1 ubiquitin-activating enzyme, E2 ubiquitin-conjugating enzyme and ubiquitin.

The protein resides in the secreted. It is found in the host cytoplasm. It localises to the host nucleus. The enzyme catalyses S-ubiquitinyl-[E2 ubiquitin-conjugating enzyme]-L-cysteine + [acceptor protein]-L-lysine = [E2 ubiquitin-conjugating enzyme]-L-cysteine + N(6)-ubiquitinyl-[acceptor protein]-L-lysine.. Its activity is regulated as follows. Exists in an autoinhibited state in the absence of substrate protein, due to interactions of the leucine-rich repeats with NEL domain. Is activated upon binding to a substrate protein. Its function is as follows. Effector E3 ubiquitin ligase that interferes with host's ubiquitination pathway and modulates the acute inflammatory responses, thus facilitating bacterial colonization within the host cell. Interacts with IKBKG (NEMO) and TNIP1 (ABIN-1), a ubiquitin-binding adapter protein, which results in TNIP1-dependent 'Lys-27'-linked polyubiquitination of IKBKG. Consequently, polyubiquitinated IKBKG undergoes proteasome-dependent degradation, which perturbs NF-kappa-B activation during bacterial infection. Mediates polyubiquitination of host U2AF1, leading to its proteasomal degradation. Catalyzes 'Lys-48'-linked polyubiquitination and subsequent degradation of a subset of host guanylate-binding proteins (GBP1, GBP2, GBP4 and GBP6), thereby suppressing host cell defense. In contrast, host GBP3 and GBP7 are not ubiquitinated by IpaH9.8. Uses UBE2D2 (UBCH5B) as an E2 ubiquitin-conjugating enzyme. The polypeptide is E3 ubiquitin-protein ligase ipaH9.8 (ipaH9.8) (Shigella flexneri serotype X (strain 2002017)).